The chain runs to 537 residues: CTP synthase (537 aa).

Residues 1–265 (MTKFIFVTGG…GKYLVKRLGL (265 aa)) are amidoligase domain. Serine 13 serves as a coordination point for CTP. Serine 13 serves as a coordination point for UTP. ATP is bound at residue 14–19 (GLGKGI). Residue tyrosine 54 coordinates L-glutamine. Aspartate 71 contributes to the ATP binding site. Mg(2+) contacts are provided by aspartate 71 and glutamate 139. CTP is bound by residues 146–148 (DIE), 186–191 (KTKPTQ), and lysine 222. Residues 186–191 (KTKPTQ) and lysine 222 contribute to the UTP site. The region spanning 290 to 532 (EIAIVGKYVK…VKAAKEYKQE (243 aa)) is the Glutamine amidotransferase type-1 domain. Glycine 351 provides a ligand contact to L-glutamine. Catalysis depends on cysteine 378, which acts as the Nucleophile; for glutamine hydrolysis. L-glutamine is bound by residues 379-382 (FGFQ), glutamate 402, and arginine 459. Residues histidine 505 and glutamate 507 contribute to the active site.

It belongs to the CTP synthase family. Homotetramer.

It catalyses the reaction UTP + L-glutamine + ATP + H2O = CTP + L-glutamate + ADP + phosphate + 2 H(+). The enzyme catalyses L-glutamine + H2O = L-glutamate + NH4(+). The catalysed reaction is UTP + NH4(+) + ATP = CTP + ADP + phosphate + 2 H(+). It participates in pyrimidine metabolism; CTP biosynthesis via de novo pathway; CTP from UDP: step 2/2. Its activity is regulated as follows. Allosterically activated by GTP, when glutamine is the substrate; GTP has no effect on the reaction when ammonia is the substrate. The allosteric effector GTP functions by stabilizing the protein conformation that binds the tetrahedral intermediate(s) formed during glutamine hydrolysis. Inhibited by the product CTP, via allosteric rather than competitive inhibition. In terms of biological role, catalyzes the ATP-dependent amination of UTP to CTP with either L-glutamine or ammonia as the source of nitrogen. Regulates intracellular CTP levels through interactions with the four ribonucleotide triphosphates. This chain is CTP synthase, found in Pyrococcus abyssi (strain GE5 / Orsay).